A 346-amino-acid polypeptide reads, in one-letter code: E3 ubiquitin-protein ligase MARCHF9 (346 aa).

Disordered stretches follow at residues 20-39 (GGGR…GGCG) and 47-92 (STRD…PGAL). Residues 63-75 (PRARGLAGDKEPR) are compositionally biased toward basic and acidic residues. A compositionally biased stretch (pro residues) spans 77-90 (GPLPPPAPPLPPPG). An RING-CH-type zinc finger spans residues 102-162 (DSGLRTPQCR…ELCYFKYQVL (61 aa)). Zn(2+) contacts are provided by cysteine 110, cysteine 113, cysteine 126, cysteine 128, histidine 136, cysteine 139, cysteine 152, and cysteine 155. 2 consecutive transmembrane segments (helical) span residues 185–205 (IAAI…LIWS) and 219–239 (LFQI…GLII). Disordered regions lie at residues 273–301 (DAGG…RPPA) and 326–346 (PPDA…VTTV). Over residues 284–296 (PRNSRTGPTSGAT) the composition is skewed to polar residues.

As to quaternary structure, homodimer. In terms of tissue distribution, ubiquitously expressed.

The protein resides in the golgi apparatus membrane. It is found in the lysosome membrane. The catalysed reaction is S-ubiquitinyl-[E2 ubiquitin-conjugating enzyme]-L-cysteine + [acceptor protein]-L-lysine = [E2 ubiquitin-conjugating enzyme]-L-cysteine + N(6)-ubiquitinyl-[acceptor protein]-L-lysine.. Its pathway is protein modification; protein ubiquitination. In terms of biological role, E3 ubiquitin-protein ligase that may mediate ubiquitination of MHC-I, CD4 and ICAM1, and promote their subsequent endocytosis and sorting to lysosomes via multivesicular bodies. E3 ubiquitin ligases accept ubiquitin from an E2 ubiquitin-conjugating enzyme in the form of a thioester and then directly transfer the ubiquitin to targeted substrates. The sequence is that of E3 ubiquitin-protein ligase MARCHF9 from Homo sapiens (Human).